The sequence spans 464 residues: Anthocyanidin 3-O-galactosyltransferase 3GT1 (464 aa).

S19 and H21 together coordinate an anthocyanidin. The active-site Proton acceptor is the H21. The N-linked (GlcNAc...) asparagine glycan is linked to N38. Residue D121 is the Charge relay of the active site. H152 is a binding site for an anthocyanidin. Residues A342, Q344, H359, W362, N363, S364, and E367 each contribute to the UDP-alpha-D-glucose site. G382 contributes to the an anthocyanidin binding site. D383 contributes to the UDP-alpha-D-glucose binding site.

Belongs to the UDP-glycosyltransferase family. As to quaternary structure, monomer. In terms of tissue distribution, mostly expressed in leaves and flowers and, to a lower extent, in roots. In flowers, mainly observed in petals, toruses and scapes, and at lower levels in pistils and stamens.

The catalysed reaction is cyanidin + UDP-alpha-D-galactose = cyanidin 3-O-beta-D-galactoside + UDP + H(+). It catalyses the reaction cyanidin + UDP-alpha-D-glucose = cyanidin 3-O-beta-D-glucoside + UDP + H(+). The enzyme catalyses delphinidin + UDP-alpha-D-glucose = delphinidin 3-O-beta-D-glucoside + UDP. It carries out the reaction malvidin + UDP-alpha-D-glucose = malvidin 3-O-beta-D-glucoside + UDP. The catalysed reaction is delphinidin + UDP-alpha-D-galactose = delphinidin 3-O-beta-D-galactoside + UDP + H(+). It catalyses the reaction pelargonidin + UDP-alpha-D-galactose = pelargonidin 3-O-beta-D-galactoside betaine + UDP. The enzyme catalyses peonidin + UDP-alpha-D-galactose = peonidin 3-O-beta-D-galactoside + UDP. It carries out the reaction malvidin + UDP-alpha-D-galactose = malvidin 3-O-beta-D-galactoside + UDP + H(+). The catalysed reaction is petunidin + UDP-alpha-D-galactose = petunidin 3-O-beta-D-galactoside + UDP. It catalyses the reaction an anthocyanidin + UDP-alpha-D-glucose + H(+) = an anthocyanidin 3-O-beta-D-glucoside + UDP. The enzyme catalyses an anthocyanidin + UDP-alpha-D-galactose = an anthocyanidin 3-O-beta-D-galactoside + UDP. Its pathway is pigment biosynthesis; anthocyanin biosynthesis. Flavonoid 3-O-glycosyltransferase involved in the biosynthesis of anthocyanins conferring flower red/pink colors, mainly anthocyanidin 3-O-glycosides. Catalyzes the addition of UDP-sugar to the 3-OH of anthocyanidin, with a preference for UDP-galactose (UDP-Gal) as sugar donor and cyanidin as substrate; able to use delphinidin, pelargonidin, peonidin, malvidin and petunidin as substrates in the presence of UDP-Gal. Can also use UDP-glucose (UDP-Glu) as sugar donor with delphinidin, cyanidin and malvidin as substrates, but not active on pelargonidin, peonidin and petunidin. The chain is Anthocyanidin 3-O-galactosyltransferase 3GT1 from Rhododendron delavayi (Rhododendron).